The primary structure comprises 368 residues: Agmatine deiminase (368 aa).

Cys357 functions as the Amidino-cysteine intermediate in the catalytic mechanism.

The protein belongs to the agmatine deiminase family. In terms of assembly, homodimer.

It carries out the reaction agmatine + H2O = N-carbamoylputrescine + NH4(+). It functions in the pathway amine and polyamine biosynthesis; putrescine biosynthesis via agmatine pathway; N-carbamoylputrescine from agmatine: step 1/1. Its function is as follows. Mediates the hydrolysis of agmatine into N-carbamoylputrescine in the arginine decarboxylase (ADC) pathway of putrescine biosynthesis, a basic polyamine. The polypeptide is Agmatine deiminase (Pseudomonas syringae pv. syringae (strain B728a)).